The following is a 62-amino-acid chain: Beta-defensin 33 (62 aa).

A signal peptide spans 1–20 (MRLLFLLFILLVCLAQTTSG). 3 disulfides stabilise this stretch: Cys-30/Cys-59, Cys-37/Cys-52, and Cys-45/Cys-60.

The protein belongs to the beta-defensin family.

The protein localises to the secreted. Has antibacterial activity. The sequence is that of Beta-defensin 33 (Defb33) from Mus musculus (Mouse).